A 372-amino-acid polypeptide reads, in one-letter code: Chaperone protein DnaJ (372 aa).

The region spanning 5–70 is the J domain; the sequence is DYYEVLGVSK…QKRAAYDQYG (66 aa). The segment at 127 to 205 adopts a CR-type zinc-finger fold; that stretch reads GVTKEIRIPT…CHGHGRVERY (79 aa). Residues Cys-140, Cys-143, Cys-157, Cys-160, Cys-179, Cys-182, Cys-193, and Cys-196 each contribute to the Zn(2+) site. CXXCXGXG motif repeat units follow at residues 140–147, 157–164, 179–186, and 193–200; these read CDICHGSG, CSTCQGAG, CPHCHGRG, and CHKCHGHG.

This sequence belongs to the DnaJ family. Homodimer. The cofactor is Zn(2+).

It is found in the cytoplasm. Functionally, participates actively in the response to hyperosmotic and heat shock by preventing the aggregation of stress-denatured proteins and by disaggregating proteins, also in an autonomous, DnaK-independent fashion. Unfolded proteins bind initially to DnaJ; upon interaction with the DnaJ-bound protein, DnaK hydrolyzes its bound ATP, resulting in the formation of a stable complex. GrpE releases ADP from DnaK; ATP binding to DnaK triggers the release of the substrate protein, thus completing the reaction cycle. Several rounds of ATP-dependent interactions between DnaJ, DnaK and GrpE are required for fully efficient folding. Also involved, together with DnaK and GrpE, in the DNA replication of plasmids through activation of initiation proteins. The chain is Chaperone protein DnaJ from Photorhabdus laumondii subsp. laumondii (strain DSM 15139 / CIP 105565 / TT01) (Photorhabdus luminescens subsp. laumondii).